Reading from the N-terminus, the 490-residue chain is Membrane-bound lytic murein transglycosylase F (490 aa).

The signal sequence occupies residues 1-32 (MFALTAYRLRCAAWLLATGIFLLLAGCSEAKA). Residues 33–269 (PTALERVQKE…RLKDRYYGHV (237 aa)) are non-LT domain. The segment at 270-490 (DVLGYVGAYT…PDDDEGDGKL (221 aa)) is LT domain. E316 is an active-site residue. Residues 467–490 (AESGLHLPGVNKTRPDDDEGDGKL) form a disordered region.

The protein in the N-terminal section; belongs to the bacterial solute-binding protein 3 family. This sequence in the C-terminal section; belongs to the transglycosylase Slt family.

It localises to the cell outer membrane. It catalyses the reaction Exolytic cleavage of the (1-&gt;4)-beta-glycosidic linkage between N-acetylmuramic acid (MurNAc) and N-acetylglucosamine (GlcNAc) residues in peptidoglycan, from either the reducing or the non-reducing ends of the peptidoglycan chains, with concomitant formation of a 1,6-anhydrobond in the MurNAc residue.. In terms of biological role, murein-degrading enzyme that degrades murein glycan strands and insoluble, high-molecular weight murein sacculi, with the concomitant formation of a 1,6-anhydromuramoyl product. Lytic transglycosylases (LTs) play an integral role in the metabolism of the peptidoglycan (PG) sacculus. Their lytic action creates space within the PG sacculus to allow for its expansion as well as for the insertion of various structures such as secretion systems and flagella. This is Membrane-bound lytic murein transglycosylase F from Pseudomonas paraeruginosa (strain DSM 24068 / PA7) (Pseudomonas aeruginosa (strain PA7)).